The primary structure comprises 360 residues: Photosystem II protein D1 (360 aa).

3 helical membrane passes run 29-46, 118-133, and 142-156; these read YIGW…AATA, HFLL…QWEL, and WICV…SATA. Histidine 118 is a chlorophyll a binding site. Tyrosine 126 contributes to the pheophytin a binding site. Residues aspartate 170 and glutamate 189 each contribute to the [CaMn4O5] cluster site. The helical transmembrane segment at 197–218 threads the bilayer; the sequence is FHMLGVAGVFGGSLFSAMHGSL. Histidine 198 lines the chlorophyll a pocket. A quinone is bound by residues histidine 215 and 264 to 265; that span reads SF. Histidine 215 is a Fe cation binding site. Histidine 272 lines the Fe cation pocket. Residues 274-288 form a helical membrane-spanning segment; that stretch reads FLAAWPVVGIWFTAL. The [CaMn4O5] cluster site is built by histidine 332, glutamate 333, aspartate 342, and alanine 344. A propeptide spanning residues 345-360 is cleaved from the precursor; the sequence is AGEVAPVALTAPAING.

This sequence belongs to the reaction center PufL/M/PsbA/D family. PSII is composed of 1 copy each of membrane proteins PsbA, PsbB, PsbC, PsbD, PsbE, PsbF, PsbH, PsbI, PsbJ, PsbK, PsbL, PsbM, PsbT, PsbX, PsbY, PsbZ, Psb30/Ycf12, peripheral proteins PsbO, CyanoQ (PsbQ), PsbU, PsbV and a large number of cofactors. It forms dimeric complexes. The D1/D2 heterodimer binds P680, chlorophylls that are the primary electron donor of PSII, and subsequent electron acceptors. It shares a non-heme iron and each subunit binds pheophytin, quinone, additional chlorophylls, carotenoids and lipids. D1 provides most of the ligands for the Mn4-Ca-O5 cluster of the oxygen-evolving complex (OEC). There is also a Cl(-1) ion associated with D1 and D2, which is required for oxygen evolution. The PSII complex binds additional chlorophylls, carotenoids and specific lipids. serves as cofactor. In terms of processing, tyr-161 forms a radical intermediate that is referred to as redox-active TyrZ, YZ or Y-Z. C-terminally processed by CtpA; processing is essential to allow assembly of the oxygen-evolving complex and thus photosynthetic growth.

Its subcellular location is the cellular thylakoid membrane. It catalyses the reaction 2 a plastoquinone + 4 hnu + 2 H2O = 2 a plastoquinol + O2. Functionally, photosystem II (PSII) is a light-driven water:plastoquinone oxidoreductase that uses light energy to abstract electrons from H(2)O, generating O(2) and a proton gradient subsequently used for ATP formation. It consists of a core antenna complex that captures photons, and an electron transfer chain that converts photonic excitation into a charge separation. The D1/D2 (PsbA/PsbD) reaction center heterodimer binds P680, the primary electron donor of PSII as well as several subsequent electron acceptors. The polypeptide is Photosystem II protein D1 (Microchaete diplosiphon (Fremyella diplosiphon)).